Here is a 688-residue protein sequence, read N- to C-terminus: Glycine--tRNA ligase beta subunit (688 aa).

The protein belongs to the class-II aminoacyl-tRNA synthetase family. Tetramer of two alpha and two beta subunits.

The protein localises to the cytoplasm. It carries out the reaction tRNA(Gly) + glycine + ATP = glycyl-tRNA(Gly) + AMP + diphosphate. In Desulforudis audaxviator (strain MP104C), this protein is Glycine--tRNA ligase beta subunit.